A 720-amino-acid polypeptide reads, in one-letter code: Catalase-peroxidase (720 aa).

The N-terminal stretch at 1–21 (MSENKCPVMHGSATTTENSMA) is a signal peptide. The segment at residues 94–222 (WHAAGTYRIA…LAAVMMGLIY (129 aa)) is a cross-link (tryptophyl-tyrosyl-methioninium (Trp-Tyr) (with M-248)). His95 functions as the Proton acceptor in the catalytic mechanism. Residues 222–248 (YVNPEGVDGKPDPLKTAQDIRETFARM) constitute a cross-link (tryptophyl-tyrosyl-methioninium (Tyr-Met) (with W-94)). His263 contributes to the heme b binding site.

It belongs to the peroxidase family. Peroxidase/catalase subfamily. In terms of assembly, homodimer or homotetramer. Heme b is required as a cofactor. Formation of the three residue Trp-Tyr-Met cross-link is important for the catalase, but not the peroxidase activity of the enzyme.

The enzyme catalyses H2O2 + AH2 = A + 2 H2O. The catalysed reaction is 2 H2O2 = O2 + 2 H2O. Its function is as follows. Bifunctional enzyme with both catalase and broad-spectrum peroxidase activity. This is Catalase-peroxidase from Shewanella denitrificans (strain OS217 / ATCC BAA-1090 / DSM 15013).